The sequence spans 237 residues: Phosphoribosylaminoimidazole-succinocarboxamide synthase (237 aa).

It belongs to the SAICAR synthetase family.

The catalysed reaction is 5-amino-1-(5-phospho-D-ribosyl)imidazole-4-carboxylate + L-aspartate + ATP = (2S)-2-[5-amino-1-(5-phospho-beta-D-ribosyl)imidazole-4-carboxamido]succinate + ADP + phosphate + 2 H(+). Its pathway is purine metabolism; IMP biosynthesis via de novo pathway; 5-amino-1-(5-phospho-D-ribosyl)imidazole-4-carboxamide from 5-amino-1-(5-phospho-D-ribosyl)imidazole-4-carboxylate: step 1/2. The chain is Phosphoribosylaminoimidazole-succinocarboxamide synthase from Baumannia cicadellinicola subsp. Homalodisca coagulata.